A 332-amino-acid chain; its full sequence is Glycerol-3-phosphate dehydrogenase [NAD(P)+] (332 aa).

NADPH contacts are provided by Trp-11, Arg-30, and Lys-108. Positions 108, 137, and 139 each coordinate sn-glycerol 3-phosphate. Ala-141 serves as a coordination point for NADPH. Sn-glycerol 3-phosphate-binding residues include Lys-192, Asp-245, Ser-255, Arg-256, and Asn-257. Catalysis depends on Lys-192, which acts as the Proton acceptor. Arg-256 is a binding site for NADPH. Residues Val-280 and Glu-282 each contribute to the NADPH site.

It belongs to the NAD-dependent glycerol-3-phosphate dehydrogenase family.

It localises to the cytoplasm. It carries out the reaction sn-glycerol 3-phosphate + NAD(+) = dihydroxyacetone phosphate + NADH + H(+). It catalyses the reaction sn-glycerol 3-phosphate + NADP(+) = dihydroxyacetone phosphate + NADPH + H(+). It functions in the pathway membrane lipid metabolism; glycerophospholipid metabolism. Catalyzes the reduction of the glycolytic intermediate dihydroxyacetone phosphate (DHAP) to sn-glycerol 3-phosphate (G3P), the key precursor for phospholipid synthesis. The protein is Glycerol-3-phosphate dehydrogenase [NAD(P)+] of Burkholderia vietnamiensis (strain G4 / LMG 22486) (Burkholderia cepacia (strain R1808)).